Reading from the N-terminus, the 417-residue chain is Probable diacetyl reductase [(R)-acetoin forming] 2 (417 aa).

Cys39 is a Zn(2+) binding site. Ser63 is subject to Phosphoserine. Positions 64, 120, 123, 131, and 173 each coordinate Zn(2+). A disordered region spans residues 380 to 417 (GELNREADNEKKEISELSSRKDQERLRESINEAKLRHT). A compositionally biased stretch (basic and acidic residues) spans 381–417 (ELNREADNEKKEISELSSRKDQERLRESINEAKLRHT).

Belongs to the zinc-containing alcohol dehydrogenase family. Zn(2+) is required as a cofactor.

The protein localises to the cytoplasm. It is found in the nucleus. The enzyme catalyses (R)-acetoin + NAD(+) = diacetyl + NADH + H(+). Functionally, catalyzes the irreversible reduction of 2,3-butanediol to (S)-acetoin in the presence of NADH. This Saccharomyces cerevisiae (strain ATCC 204508 / S288c) (Baker's yeast) protein is Probable diacetyl reductase [(R)-acetoin forming] 2 (BDH2).